Here is a 273-residue protein sequence, read N- to C-terminus: 2,3,4,5-tetrahydropyridine-2,6-dicarboxylate N-succinyltransferase (273 aa).

Residues arginine 104 and aspartate 141 each contribute to the substrate site.

This sequence belongs to the transferase hexapeptide repeat family. As to quaternary structure, homotrimer.

The protein localises to the cytoplasm. The enzyme catalyses (S)-2,3,4,5-tetrahydrodipicolinate + succinyl-CoA + H2O = (S)-2-succinylamino-6-oxoheptanedioate + CoA. Its pathway is amino-acid biosynthesis; L-lysine biosynthesis via DAP pathway; LL-2,6-diaminopimelate from (S)-tetrahydrodipicolinate (succinylase route): step 1/3. The chain is 2,3,4,5-tetrahydropyridine-2,6-dicarboxylate N-succinyltransferase from Chromobacterium violaceum (strain ATCC 12472 / DSM 30191 / JCM 1249 / CCUG 213 / NBRC 12614 / NCIMB 9131 / NCTC 9757 / MK).